A 1134-amino-acid polypeptide reads, in one-letter code: MDLCLKGSQINLATRQKTKPKYTSRSLTTLHNPCPHFRPRSANFLQQRSRSSPFLGRPQSADPKFGRRLSNYFVEKELRNGGKRQVSSNDLLKSLLEEPIKRSWLCRSTCNSSESDYSLHKRTPDSSEEGEQFLVNMPVGEKVKSYSSYSGNQGLSNGALLQRTAKPDLPGRVSFSKPNMHADLDSSDCDNDKQEVRPSISAPGPLTLPSFLSKVEQADPVGQKKSVHFGSTAAEGEVLAETYEYPKCPSENCTCSTRSSSTTSTNEASASDVKCACDAPSCRFMESSKQVEPTSPTPTLPKAPSSELDVIREYKQAVEGVQVVKNHLGTDTLNNIEILPNYLDKYASPTKEKQNNLSETKNMATNSSAVNNGSVVYRPVGNPRNFGAENNFLPAVQDDRRSFANGSSDGVINNYLKVASTPPFVGKKKENVKPASADPIARSSKSKVTKSTINPAPLGKMKKAISVGSLREERKLSEYNLDKVDSWMSMQDQKQYDGKHKPGLEDLDEAQDNDTASQLSLKSNEDSRDSTYDEIVSVIKEIEEDKKRDNFSEGIPSELNLNLDSRCETADTVTVSEGKVPESGDKYKDILAYLNNVESSCDKTLMETRRSIPDSNRSEVEFVVEPDVTDEVPKLSELLMLPNHQLARRVIALSLRANELANAIHMSKEHVFQLRGEKQKSLRAEKSTAAAKLRDQKKHYEEVVTRHQGFIEQLLKDKGSLCEKVAALTRRLESQNQAWEHRLETELARTKETTMAGEKIRRERWVRENTKKIKELTVKGLEAEINKMNCDHQREVTELKRTHQMQLLDALEEARTKHEQIETSIRESCAQDREAIIEKERTAIRERFERQLEEEQRTQAEQRQKLTEEFAAERDRLQSELRQRENEHQARRQEALREQEQELEQAKFEMQERMAKQEEKYQNRVNTIEQQYQADFELWKTEHENKTKLAQAEKENAIRQHYRAERDRQLDELVVRMEADALQHKEEHELKMNRLKEKYEKDLVLAESVEKSLREKYAETRGKLAEADAQVRNSQAEVKQLQLELSHSKKMCGDIIMERDRLRDNLNADIQSELGVLNERHKQEMDQLQKRVHQTIQRQEETIEILKGDNDALRQQCLKLNAVIRQQRKDYCVK.

Disordered regions lie at residues 111–131 (NSSESDYSLHKRTPDSSEEGE), 168–208 (DLPG…PLTL), 286–306 (ESSKQVEPTSPTPTLPKAPSS), 425–455 (VGKKKENVKPASADPIARSSKSKVTKSTINP), and 492–528 (DQKQYDGKHKPGLEDLDEAQDNDTASQLSLKSNEDSR). Basic and acidic residues predominate over residues 180–196 (MHADLDSSDCDNDKQEV). Over residues 494–504 (KQYDGKHKPGL) the composition is skewed to basic and acidic residues. Over residues 513–522 (NDTASQLSLK) the composition is skewed to polar residues. Residues 732–1131 (LESQNQAWEH…AVIRQQRKDY (400 aa)) are a coiled coil.

It belongs to the CEP131 family. As to expression, expressed in chordotonal (Ch) neuronal precursors. Expressed in ciliated cells, like sensory neurons and spermatids.

The protein localises to the cytoplasm. It localises to the cytoskeleton. It is found in the microtubule organizing center. The protein resides in the centrosome. Its subcellular location is the cilium basal body. The protein localises to the centriole. In terms of biological role, cilium-specific protein with a role in cilium/flagellum formation. May be involved in transport of components into the growing cilium. In germ cells and sensory neurons, plays a role with Cby in the building of the transition zone necessary for the formation of the ciliary cap and for the correct elongation of the axoneme. The polypeptide is Centrosomal protein of 131 kDa (Drosophila melanogaster (Fruit fly)).